We begin with the raw amino-acid sequence, 205 residues long: Ras-related protein Rab-1A (205 aa).

Residues 18–26 (GDSGVGKSC), 36–43 (YTESYIST), 66–70 (DTAGQ), 124–127 (NKSD), and 154–156 (SAK) each bind GTP. The short motif at 40–48 (YISTIGVDF) is the Effector region element. Positions 183 to 198 (SDSKPSVKINSSTPVS) are enriched in polar residues. A disordered region spans residues 183-205 (SDSKPSVKINSSTPVSANKGGCC). S-geranylgeranyl cysteine attachment occurs at residues Cys204 and Cys205.

It belongs to the small GTPase superfamily. Rab family.

Its subcellular location is the golgi apparatus. It is found in the endoplasmic reticulum. Functionally, probably required for transit of protein from the ER through Golgi compartment. The chain is Ras-related protein Rab-1A (RAB1A) from Lymnaea stagnalis (Great pond snail).